The following is a 318-amino-acid chain: Bis(5'-nucleosyl)-tetraphosphatase, symmetrical (318 aa).

Residues 269–318 (PGREVTGPAPVARAPRRPRERLGRQRSRGNRGNAGNTAVPAKPPVDTPQD) are disordered. Over residues 282 to 297 (APRRPRERLGRQRSRG) the composition is skewed to basic residues. Residues 309-318 (AKPPVDTPQD) are compositionally biased toward pro residues.

This sequence belongs to the Ap4A hydrolase family.

The enzyme catalyses P(1),P(4)-bis(5'-adenosyl) tetraphosphate + H2O = 2 ADP + 2 H(+). In terms of biological role, hydrolyzes diadenosine 5',5'''-P1,P4-tetraphosphate to yield ADP. The chain is Bis(5'-nucleosyl)-tetraphosphatase, symmetrical from Xanthomonas oryzae pv. oryzae (strain MAFF 311018).